The sequence spans 166 residues: Prorelaxin H2 (166 aa).

The first 5 residues, 1–5 (SRAVA), serve as a signal peptide directing secretion. Intrachain disulfides connect Cys-16/Cys-153, Cys-28/Cys-166, and Cys-152/Cys-157. A propeptide spans 37-138 (SLSQEDAPQT…LKYLGLDTHS (102 aa)) (connecting peptide).

The protein belongs to the insulin family. As to quaternary structure, heterodimer of a B chain and an A chain linked by two disulfide bonds. Expressed in the corpus luteum of pregnancy and in the placenta.

It localises to the secreted. Relaxin is an ovarian hormone that acts with estrogen to produce dilatation of the birth canal in many mammals. May be involved in remodeling of connective tissues during pregnancy, promoting growth of pubic ligaments and ripening of the cervix. This Pan troglodytes (Chimpanzee) protein is Prorelaxin H2 (RNL2).